Reading from the N-terminus, the 74-residue chain is Acyl carrier protein (74 aa).

The region spanning 1-73 (MAVFEKVQEI…DLVAYVEEKS (73 aa)) is the Carrier domain. Serine 35 carries the post-translational modification O-(pantetheine 4'-phosphoryl)serine.

The protein belongs to the acyl carrier protein (ACP) family. Post-translationally, 4'-phosphopantetheine is transferred from CoA to a specific serine of apo-ACP by AcpS. This modification is essential for activity because fatty acids are bound in thioester linkage to the sulfhydryl of the prosthetic group.

It is found in the cytoplasm. It participates in lipid metabolism; fatty acid biosynthesis. Carrier of the growing fatty acid chain in fatty acid biosynthesis. The polypeptide is Acyl carrier protein (Streptococcus pyogenes serotype M1).